We begin with the raw amino-acid sequence, 76 residues long: Exodeoxyribonuclease 7 small subunit (76 aa).

Belongs to the XseB family. Heterooligomer composed of large and small subunits.

It localises to the cytoplasm. It catalyses the reaction Exonucleolytic cleavage in either 5'- to 3'- or 3'- to 5'-direction to yield nucleoside 5'-phosphates.. Functionally, bidirectionally degrades single-stranded DNA into large acid-insoluble oligonucleotides, which are then degraded further into small acid-soluble oligonucleotides. The sequence is that of Exodeoxyribonuclease 7 small subunit from Staphylococcus epidermidis (strain ATCC 35984 / DSM 28319 / BCRC 17069 / CCUG 31568 / BM 3577 / RP62A).